The following is a 598-amino-acid chain: Elongation factor 4 (598 aa).

The 183-residue stretch at 2 to 184 (KNIRNFSIIA…RLVKEIPAPE (183 aa)) folds into the tr-type G domain. GTP contacts are provided by residues 14–19 (DHGKST) and 131–134 (NKID).

This sequence belongs to the TRAFAC class translation factor GTPase superfamily. Classic translation factor GTPase family. LepA subfamily.

The protein localises to the cell inner membrane. The catalysed reaction is GTP + H2O = GDP + phosphate + H(+). Functionally, required for accurate and efficient protein synthesis under certain stress conditions. May act as a fidelity factor of the translation reaction, by catalyzing a one-codon backward translocation of tRNAs on improperly translocated ribosomes. Back-translocation proceeds from a post-translocation (POST) complex to a pre-translocation (PRE) complex, thus giving elongation factor G a second chance to translocate the tRNAs correctly. Binds to ribosomes in a GTP-dependent manner. The chain is Elongation factor 4 from Proteus mirabilis (strain HI4320).